We begin with the raw amino-acid sequence, 312 residues long: tRNA pseudouridine synthase B (312 aa).

The active-site Nucleophile is the aspartate 47.

The protein belongs to the pseudouridine synthase TruB family. Type 1 subfamily.

It carries out the reaction uridine(55) in tRNA = pseudouridine(55) in tRNA. Its function is as follows. Responsible for synthesis of pseudouridine from uracil-55 in the psi GC loop of transfer RNAs. This Vibrio cholerae serotype O1 (strain M66-2) protein is tRNA pseudouridine synthase B.